The primary structure comprises 165 residues: uncharacterized protein (165 aa).

Positions 53–123 are disordered; sequence CSEKTGSAPN…PAPSSGRQGG (71 aa). Positions 58–71 are enriched in low complexity; sequence GSAPNPGSSAPAPA.

This is an uncharacterized protein from Treponema pallidum (strain Nichols).